Consider the following 423-residue polypeptide: Salicylate 5-hydroxylase, large oxygenase component (423 aa).

The interval methionine 1–glutamate 20 is disordered. A Rieske domain is found at tryptophan 49 to alanine 168. Positions 91, 93, 111, and 114 each coordinate [2Fe-2S] cluster. Histidine 224, histidine 229, and aspartate 370 together coordinate Fe cation.

It belongs to the bacterial ring-hydroxylating dioxygenase alpha subunit family. In terms of assembly, the salicylate 5-hydroxylase (S5H) multicomponent enzyme system is composed of an electron transfer component and an oxygenase component. The electron transfer component is comprised of a ferredoxin reductase (NagAa) and a ferredoxin (NagAb), and the oxygenase component is formed by a large subunit (NagG) and a small subunit (NagH). Requires Fe cation as cofactor. [2Fe-2S] cluster is required as a cofactor.

The enzyme catalyses salicylate + NADH + O2 + H(+) = 2,5-dihydroxybenzoate + NAD(+) + H2O. Its pathway is aromatic compound metabolism; naphthalene degradation. In terms of biological role, oxygenase component of the salicylate 5-hydroxylase (S5H) multicomponent enzyme system which catalyzes the 5-hydroxylation of salicylate to gentisate. Active only on substrates with a ring-substituted carboxylate group with an adjacent hydroxyl group. Primarily active against salicylate and substituted salicylates, but not against 2-hydroxycinnamate, 3-hydroxycinnamate, 2-hydroxyphenylacetate, 3-hydroxyphenylacetate, 2-hydroxybenzophenone, 1-hydroxy-2-naphthoate, 4-methoxysalicylate or 2-hydroxyacetophenone. The protein is Salicylate 5-hydroxylase, large oxygenase component of Ralstonia sp.